We begin with the raw amino-acid sequence, 162 residues long: Beta-lactoglobulin-3 (162 aa).

Disulfide bonds link Cys66–Cys160 and Cys106–Cys119.

This sequence belongs to the calycin superfamily. Lipocalin family. Monomer.

It localises to the secreted. In terms of biological role, lactoglobulin is the primary component of whey, it binds retinol and is probably involved in the transport of that molecule. The protein is Beta-lactoglobulin-3 (LGB3) of Felis catus (Cat).